Reading from the N-terminus, the 232-residue chain is Enolase-phosphatase E1 (232 aa).

It belongs to the HAD-like hydrolase superfamily. MasA/MtnC family. Monomer. Mg(2+) is required as a cofactor.

The catalysed reaction is 5-methylsulfanyl-2,3-dioxopentyl phosphate + H2O = 1,2-dihydroxy-5-(methylsulfanyl)pent-1-en-3-one + phosphate. It functions in the pathway amino-acid biosynthesis; L-methionine biosynthesis via salvage pathway; L-methionine from S-methyl-5-thio-alpha-D-ribose 1-phosphate: step 3/6. It participates in amino-acid biosynthesis; L-methionine biosynthesis via salvage pathway; L-methionine from S-methyl-5-thio-alpha-D-ribose 1-phosphate: step 4/6. Bifunctional enzyme that catalyzes the enolization of 2,3-diketo-5-methylthiopentyl-1-phosphate (DK-MTP-1-P) into the intermediate 2-hydroxy-3-keto-5-methylthiopentenyl-1-phosphate (HK-MTPenyl-1-P), which is then dephosphorylated to form the acireductone 1,2-dihydroxy-3-keto-5-methylthiopentene (DHK-MTPene). The chain is Enolase-phosphatase E1 from Xanthomonas campestris pv. campestris (strain B100).